Here is a 426-residue protein sequence, read N- to C-terminus: Mitochondrial distribution and morphology protein 12 (426 aa).

One can recognise an SMP-LTD domain in the interval 1–426; that stretch reads MSIEVDWKTA…VFPSFWTFLI (426 aa). Disordered regions lie at residues 88–147, 185–264, and 346–370; these read AHGN…GTPG, WTDH…FRFP, and ADDQETRDKDDHPRSGLDPTTSPKR. A compositionally biased stretch (basic and acidic residues) spans 96–109; it reads THSELNEPPYRDEV. The segment covering 216-236 has biased composition (low complexity); the sequence is SSNPTSRPSTSSTLPSHPSGS. Basic and acidic residues-rich tracts occupy residues 244–264 and 349–360; these read SHPEEEHLDDPAEPDHPFRFP and QETRDKDDHPRS.

Belongs to the MDM12 family. In terms of assembly, component of the ER-mitochondria encounter structure (ERMES) or MDM complex, composed of mmm1, mdm10, mdm12 and mdm34. A mmm1 homodimer associates with one molecule of mdm12 on each side in a pairwise head-to-tail manner, and the SMP-LTD domains of mmm1 and mdm12 generate a continuous hydrophobic tunnel for phospholipid trafficking.

It is found in the mitochondrion outer membrane. Its subcellular location is the endoplasmic reticulum membrane. Its function is as follows. Component of the ERMES/MDM complex, which serves as a molecular tether to connect the endoplasmic reticulum (ER) and mitochondria. Components of this complex are involved in the control of mitochondrial shape and protein biogenesis, and function in nonvesicular lipid trafficking between the ER and mitochondria. Mdm12 is required for the interaction of the ER-resident membrane protein mmm1 and the outer mitochondrial membrane-resident beta-barrel protein mdm10. The mdm12-mmm1 subcomplex functions in the major beta-barrel assembly pathway that is responsible for biogenesis of all mitochondrial outer membrane beta-barrel proteins, and acts in a late step after the SAM complex. The mdm10-mdm12-mmm1 subcomplex further acts in the TOM40-specific pathway after the action of the mdm12-mmm1 complex. Essential for establishing and maintaining the structure of mitochondria and maintenance of mtDNA nucleoids. The protein is Mitochondrial distribution and morphology protein 12 of Aspergillus terreus (strain NIH 2624 / FGSC A1156).